Here is a 208-residue protein sequence, read N- to C-terminus: Mitochondrial import inner membrane translocase subunit Tim23 (208 aa).

Transmembrane regions (helical) follow at residues 73 to 93 (FELAFFTIGGCCITGAAFGTL), 125 to 145 (ASWANTLGSVALLYSVFGVAI), and 173 to 193 (GLKGVARGGLIGLAMSGLYAL).

Belongs to the Tim17/Tim22/Tim23 family. Component of the TIM23 complex at least composed of timm23, timm17 and timm50. The complex interacts with the timm44 component of the PAM complex.

It is found in the mitochondrion inner membrane. Its function is as follows. Essential component of the TIM23 complex, a complex that mediates the translocation of transit peptide-containing proteins across the mitochondrial inner membrane. Plays an essential role in early embryonic development. The sequence is that of Mitochondrial import inner membrane translocase subunit Tim23 (timm23) from Danio rerio (Zebrafish).